The sequence spans 482 residues: tRNA sulfurtransferase (482 aa).

Residues 61–165 (LAIRDALTRI…DDRLLLIKGR (105 aa)) form the THUMP domain. ATP-binding positions include 183 to 184 (LI), lysine 265, glycine 287, and glutamine 296. Cysteine 344 and cysteine 456 are oxidised to a cystine. Positions 404 to 482 (FGPNDVILDI…GFNNVKVYRP (79 aa)) constitute a Rhodanese domain. The Cysteine persulfide intermediate role is filled by cysteine 456.

It belongs to the ThiI family.

The protein resides in the cytoplasm. The catalysed reaction is [ThiI sulfur-carrier protein]-S-sulfanyl-L-cysteine + a uridine in tRNA + 2 reduced [2Fe-2S]-[ferredoxin] + ATP + H(+) = [ThiI sulfur-carrier protein]-L-cysteine + a 4-thiouridine in tRNA + 2 oxidized [2Fe-2S]-[ferredoxin] + AMP + diphosphate. It carries out the reaction [ThiS sulfur-carrier protein]-C-terminal Gly-Gly-AMP + S-sulfanyl-L-cysteinyl-[cysteine desulfurase] + AH2 = [ThiS sulfur-carrier protein]-C-terminal-Gly-aminoethanethioate + L-cysteinyl-[cysteine desulfurase] + A + AMP + 2 H(+). Its pathway is cofactor biosynthesis; thiamine diphosphate biosynthesis. In terms of biological role, catalyzes the ATP-dependent transfer of a sulfur to tRNA to produce 4-thiouridine in position 8 of tRNAs, which functions as a near-UV photosensor. Also catalyzes the transfer of sulfur to the sulfur carrier protein ThiS, forming ThiS-thiocarboxylate. This is a step in the synthesis of thiazole, in the thiamine biosynthesis pathway. The sulfur is donated as persulfide by IscS. This chain is tRNA sulfurtransferase, found in Escherichia coli O127:H6 (strain E2348/69 / EPEC).